The primary structure comprises 582 residues: Zinc finger protein 319 (582 aa).

Over residues 1 to 14 the composition is skewed to low complexity; it reads MSESWQQPPQTQPQ. Positions 1–39 are disordered; that stretch reads MSESWQQPPQTQPQQPQPPQPQHHAEPPPALAEHTLPPG. The segment at 76–100 adopts a C2H2-type 1 zinc-finger fold; that stretch reads PKCGVCGHDLAHLSSPHEHQCLAGH. The C2H2-type 2; degenerate zinc-finger motif lies at 104–126; that stretch reads FQCTQCLKIFHQATDLLEHQCVQ. Residue Lys130 forms a Glycyl lysine isopeptide (Lys-Gly) (interchain with G-Cter in SUMO2) linkage. The C2H2-type 3 zinc finger occupies 132–154; that stretch reads FVCGVCKMGFSLLTSLAQHHSSH. Positions 174 to 196 are enriched in low complexity; the sequence is EPATTAAPSLPAAPAPSTVTPAE. The interval 174–198 is disordered; it reads EPATTAAPSLPAAPAPSTVTPAEQA. C2H2-type zinc fingers lie at residues 202 to 224, 230 to 252, and 258 to 280; these read YSCP…ERIH, YKCT…KRTH, and YKCA…MYAH. Ser281 carries the post-translational modification Phosphoserine. The C2H2-type 7; degenerate zinc-finger motif lies at 287 to 309; the sequence is FRCNVCELHFKESSELLQHPCTP. 3 consecutive C2H2-type zinc fingers follow at residues 315-337, 343-365, and 371-393; these read FRCG…ERTH, FKCD…RRTH, and FKCG…QHVH. A C2H2-type 11; degenerate zinc finger spans residues 399 to 421; sequence FKCPVCQKGFDQSAELLRHKCLP. The C2H2-type 12 zinc-finger motif lies at 428 to 450; that stretch reads FKCPVCNKAYKRASALQKHQLAH. A C2H2-type 13; degenerate zinc finger spans residues 458 to 480; that stretch reads LRCTLCERRFFSSSEFVQHRCDP. 3 consecutive C2H2-type zinc fingers follow at residues 486–508, 514–536, and 542–564; these read LKCP…RRVH, YKCP…QGVH, and FKCV…SAQH.

This sequence belongs to the krueppel C2H2-type zinc-finger protein family.

Its subcellular location is the nucleus. In terms of biological role, may be involved in transcriptional regulation. This Homo sapiens (Human) protein is Zinc finger protein 319 (ZNF319).